The primary structure comprises 834 residues: Copper-exporting P-type ATPase (834 aa).

Residues 2–186 (SQTIDLTLDG…TAVATMKRFR (185 aa)) lie on the Cytoplasmic side of the membrane. 2 HMA domains span residues 3-64 (QTID…YDAS) and 99-162 (DSQQ…YGAE). The Cu(+) site is built by Cys-14, Cys-17, Cys-110, and Cys-113. 2 consecutive short sequence motifs (CXXC motif) follow at residues 14–17 (CGHC) and 110–113 (CASC). The chain crosses the membrane as a helical span at residues 187 to 207 (WQAIVALAVGIPVMVWGMIGD). Residues 208 to 217 (NMMVTADNRS) are Periplasmic; loop 1-facing. The helical transmembrane segment at 218–238 (LWLVIGLITLAVMVFAGGHFY) threads the bilayer. Topologically, residues 239 to 253 (RSAWKSLLNGAATMD) are cytoplasmic. The chain crosses the membrane as a helical span at residues 254 to 274 (TLVALGTGVAWLYSMSVNLWP). Residues 275–283 (QWFPMEARH) lie on the Periplasmic; loop 2 side of the membrane. The helical transmembrane segment at 284–304 (LYYEASAMIIGLINLGHMLEA) threads the bilayer. The Cytoplasmic portion of the chain corresponds to 305–437 (RARQRSSKAL…EIGQLADKIS (133 aa)). A helical transmembrane segment spans residues 438-458 (AVFVPVVVVIALVSAAIWYFF). Residues 459-463 (GPAPQ) are Periplasmic; loop 3-facing. The chain crosses the membrane as a helical span at residues 464 to 484 (IVYTLVIATTVLIIACPCALG). Topologically, residues 485-778 (LATPMSIISG…ATLHNMKQNL (294 aa)) are cytoplasmic. Asp-523 serves as the catalytic 4-aspartylphosphate intermediate. Residues Asp-720 and Asp-724 each coordinate Mg(2+). The chain crosses the membrane as a helical span at residues 779–799 (LGAFIYNSIGIPVAAGILWPF). Residue Thr-800 is a topological domain, periplasmic; loop 4. The helical transmembrane segment at 801 to 821 (GTLLNPVVAGAAMALSSITVV) threads the bilayer. Residues 822–834 (SNANRLLRFKPKE) are Cytoplasmic-facing.

This sequence belongs to the cation transport ATPase (P-type) (TC 3.A.3) family. Type IB subfamily. Copper-exporting P-type ATPase interacts with apo-periplasmic copper chaperone CusF; when CusF is precharged with copper it binds very little CopA. The periplasmic loops of CopA, especially the first half of loop 1, play a large role in binding to CusF.

The protein localises to the cell inner membrane. The protein resides in the cytoplasm. It carries out the reaction Cu(+)(in) + ATP + H2O = Cu(+)(out) + ADP + phosphate + H(+). With respect to regulation, export is inhibited by vanadate. Phosphorylation is inhibited by vanadate and sensitive to KOH and hydroxylamine; it is not inhibited by azide. Phosphorylation is Cu(+) not Cu(2+)-dependent. ATPase activity is inhibited by bathocuproindisulfonate (BCDS), which chelates Cu(+) but not Cu(2+), and stimulated 3-4-fold by Cu(+). ATPase activity is inhibited by Cu(2+) plus DTT or Ag(+). Exports Cu(+) from the cytoplasm to the periplasm. Binds 2 Cu(+) ions per monomer, which are transferred to periplasmic copper chaperone CusF upon ATP hydrolysis. In vitro an excess of CusF over CopA is required for efficient transfer. May also be involved in silver export. In terms of biological role, mRNA is subject to programmed ribosomal frameshifting which produces a cytoplasmic copper chaperone CopA(Z) that corresponds to the first HMA domain. The soluble form is essential for cell survivial in the presence of CuSO(4); in growth competition experiments between wild-type and a version that prevents expression of CopA(Z) after 50 generations the non-CopA(Z) version is nearly extinct. The first HMA domain (residues 1-70) can be replaced by B.subtilis Cu chaperone CopZ. The protein is Copper-exporting P-type ATPase of Escherichia coli (strain K12).